A 563-amino-acid chain; its full sequence is uncharacterized protein (563 aa).

Belongs to the HyuB family.

This is an uncharacterized protein from Methanocaldococcus jannaschii (strain ATCC 43067 / DSM 2661 / JAL-1 / JCM 10045 / NBRC 100440) (Methanococcus jannaschii).